A 355-amino-acid chain; its full sequence is Guanine nucleotide-binding protein alpha-12 subunit (355 aa).

The G-alpha domain maps to 28 to 355 (RQINLLLLGS…EQNLKTLMMQ (328 aa)). Residues 31–44 (NLLLLGSGESGKST) are G1 motif. GTP is bound by residues 36-43 (GSGESGKS), 176-182 (LFCRKAT), 201-205 (DVGGQ), 270-273 (NKND), and A327. S43 and T182 together coordinate Mg(2+). Positions 174–182 (DILFCRKAT) are G2 motif. Positions 197–206 (FRFIDVGGQR) are G3 motif. Residues 266-273 (ILFMNKND) are G4 motif. The interval 325–330 (TTAVDT) is G5 motif.

The protein belongs to the G-alpha family. G proteins are composed of 3 units; alpha, beta and gamma. The alpha chain contains the guanine nucleotide binding site.

Functionally, guanine nucleotide-binding proteins (G proteins) are involved as modulators or transducers in various transmembrane signaling systems. May play a role in resistance to fungal infection in the epidermis by regulating the up-regulation of several antimicrobial peptides of the NLP and CNC families. Upstream of plc-3, tpa-1 and the p38-like pathway, required for the expression of antimicrobial peptide nlp-29 in the epidermis in response to fungal infection or physical injury. The sequence is that of Guanine nucleotide-binding protein alpha-12 subunit (gpa-12) from Caenorhabditis elegans.